Consider the following 267-residue polypeptide: RWD domain-containing protein 3 (267 aa).

An RWD domain is found at 7-114 (QELSALAAIF…LWTQQNLRHI (108 aa)). Interaction with UBE2I/UBC9 stretches follow at residues 13–15 (AAI) and 100–102 (VHE).

Interacts with UBE2I/UBC9, NFKBIA, HIF1A and NCOA2.

It is found in the nucleus. The protein localises to the cytoplasm. Enhancer of SUMO conjugation. Via its interaction with UBE2I/UBC9, increases SUMO conjugation to proteins by promoting the binding of E1 and E2 enzymes, thioester linkage between SUMO and UBE2I/UBC9 and transfer of SUMO to specific target proteins which include HIF1A, PIAS, NFKBIA, NR3C1 and TOP1. Positively regulates the NF-kappa-B signaling pathway by enhancing the sumoylation of NF-kappa-B inhibitor alpha (NFKBIA), promoting its stabilization which consequently leads to an increased inhibition of NF-kappa-B transcriptional activity. Negatively regulates the hypoxia-inducible factor-1 alpha (HIF1A) signaling pathway by increasing the sumoylation of HIF1A, promoting its stabilization, transcriptional activity and the expression of its target gene VEGFA during hypoxia. Has no effect on ubiquitination. The polypeptide is RWD domain-containing protein 3 (Rwdd3) (Rattus norvegicus (Rat)).